Reading from the N-terminus, the 744-residue chain is Phosphoribosylformylglycinamidine synthase subunit PurL (744 aa).

His50 is a catalytic residue. ATP is bound by residues Tyr53 and Lys92. Residue Glu94 coordinates Mg(2+). Substrate-binding positions include 95–98 (SHNH) and Arg117. The Proton acceptor role is filled by His96. Position 118 (Asp118) interacts with Mg(2+). Position 241 (Gln241) interacts with substrate. Asp269 is a binding site for Mg(2+). 313-315 (ESQ) is a binding site for substrate. Asp495 and Gly532 together coordinate ATP. Asn533 contacts Mg(2+). Ser535 serves as a coordination point for substrate.

It belongs to the FGAMS family. Monomer. Part of the FGAM synthase complex composed of 1 PurL, 1 PurQ and 2 PurS subunits.

It is found in the cytoplasm. It catalyses the reaction N(2)-formyl-N(1)-(5-phospho-beta-D-ribosyl)glycinamide + L-glutamine + ATP + H2O = 2-formamido-N(1)-(5-O-phospho-beta-D-ribosyl)acetamidine + L-glutamate + ADP + phosphate + H(+). It functions in the pathway purine metabolism; IMP biosynthesis via de novo pathway; 5-amino-1-(5-phospho-D-ribosyl)imidazole from N(2)-formyl-N(1)-(5-phospho-D-ribosyl)glycinamide: step 1/2. Part of the phosphoribosylformylglycinamidine synthase complex involved in the purines biosynthetic pathway. Catalyzes the ATP-dependent conversion of formylglycinamide ribonucleotide (FGAR) and glutamine to yield formylglycinamidine ribonucleotide (FGAM) and glutamate. The FGAM synthase complex is composed of three subunits. PurQ produces an ammonia molecule by converting glutamine to glutamate. PurL transfers the ammonia molecule to FGAR to form FGAM in an ATP-dependent manner. PurS interacts with PurQ and PurL and is thought to assist in the transfer of the ammonia molecule from PurQ to PurL. The chain is Phosphoribosylformylglycinamidine synthase subunit PurL from Rhizobium johnstonii (strain DSM 114642 / LMG 32736 / 3841) (Rhizobium leguminosarum bv. viciae).